The following is a 77-amino-acid chain: uncharacterized protein (77 aa).

Residues 1 to 77 form the Peptidase A1 domain; sequence MAFERQGKIE…VAILDGKLVW (77 aa).

This is an uncharacterized protein from Saccharomyces cerevisiae (strain ATCC 204508 / S288c) (Baker's yeast).